We begin with the raw amino-acid sequence, 73 residues long: Homeodomain-only protein (73 aa).

The segment at residues 3–62 is a DNA-binding region (homeobox; degenerate); that stretch reads AEPANGPTEDQVEILEYNFNKVNRHPDPTTLCLIAAEAGLSEEETQKWFKQRLAQWRRSE.

As to quaternary structure, interacts with serum response factor (SRF). Component of a large complex containing histone deacetylases such as HDAC2. Interacts with the acetylated forms of HSPA1A and HSPA1B. Interacts with HSPA8.

It is found in the nucleus. The protein resides in the cytoplasm. In terms of biological role, atypical homeodomain protein which does not bind DNA and is required to modulate cardiac growth and development. Acts via its interaction with SRF, thereby modulating the expression of SRF-dependent cardiac-specific genes and cardiac development. Prevents SRF-dependent transcription either by inhibiting SRF binding to DNA or by recruiting histone deacetylase (HDAC) proteins that prevent transcription by SRF. Overexpression causes cardiac hypertrophy. Acts as a co-chaperone for HSPA1A and HSPA1B chaperone proteins and assists in chaperone-mediated protein refolding. The sequence is that of Homeodomain-only protein (HOPX) from Sus scrofa (Pig).